Consider the following 499-residue polypeptide: NAD(P)H-quinone oxidoreductase chain 4, chloroplastic (499 aa).

14 helical membrane passes run 4–24 (FPWL…IPFL), 31–51 (IIRW…TYIF), 87–107 (IGLI…AWPV), 113–133 (LFYF…ASQD), 134–154 (ILLF…LLAM), 167–187 (FILY…IMAF), 211–231 (IIIY…IPFH), 242–262 (HYST…YGLI), 274–294 (SFFA…AALT), 310–330 (VSHM…GLNG), 331–351 (AILQ…LAGI), 385–405 (SLAL…LGVI), 416–436 (IIII…LLSM), and 462–482 (IFIL…PNFV).

It belongs to the complex I subunit 4 family.

The protein localises to the plastid. It is found in the chloroplast thylakoid membrane. It carries out the reaction a plastoquinone + NADH + (n+1) H(+)(in) = a plastoquinol + NAD(+) + n H(+)(out). The enzyme catalyses a plastoquinone + NADPH + (n+1) H(+)(in) = a plastoquinol + NADP(+) + n H(+)(out). This is NAD(P)H-quinone oxidoreductase chain 4, chloroplastic (ndhD) from Marchantia polymorpha (Common liverwort).